A 317-amino-acid polypeptide reads, in one-letter code: Probable porphobilinogen deaminase (317 aa).

At Cys-234 the chain carries S-(dipyrrolylmethanemethyl)cysteine.

This sequence belongs to the HMBS family. Requires dipyrromethane as cofactor.

It catalyses the reaction 4 porphobilinogen + H2O = hydroxymethylbilane + 4 NH4(+). The protein operates within porphyrin-containing compound metabolism; protoporphyrin-IX biosynthesis; coproporphyrinogen-III from 5-aminolevulinate: step 2/4. In terms of biological role, tetrapolymerization of the monopyrrole PBG into the hydroxymethylbilane pre-uroporphyrinogen in several discrete steps. The polypeptide is Probable porphobilinogen deaminase (Methanosarcina acetivorans (strain ATCC 35395 / DSM 2834 / JCM 12185 / C2A)).